A 382-amino-acid polypeptide reads, in one-letter code: Neuropeptide Y receptor type 1 (382 aa).

The Extracellular segment spans residues Met1 to His33. 3 N-linked (GlcNAc...) asparagine glycosylation sites follow: Asn2, Asn11, and Asn17. The helical transmembrane segment at Leu34–Val54 threads the bilayer. The Cytoplasmic portion of the chain corresponds to Thr55–Asn75. A helical membrane pass occupies residues Ile76–Thr96. Over Phe97 to Asn115 the chain is Extracellular. A disulfide bridge connects residues Cys112 and Cys197. The helical transmembrane segment at Pro116 to Glu136 threads the bilayer. Over Arg137 to His153 the chain is Cytoplasmic. A helical transmembrane segment spans residues Ala154–Ile174. At Tyr175–Tyr210 the chain is on the extracellular side. Asn185 carries an N-linked (GlcNAc...) asparagine glycan. The helical transmembrane segment at Thr211–Phe231 threads the bilayer. The Cytoplasmic segment spans residues Lys232 to Arg259. Residues Ile260 to Ile280 form a helical membrane-spanning segment. Topologically, residues Phe281–Asn298 are extracellular. Residues Leu299–Tyr319 traverse the membrane as a helical segment. Over Gly320–Ile382 the chain is Cytoplasmic. The S-palmitoyl cysteine moiety is linked to residue Cys337. Residue Ser367 is modified to Phosphoserine.

Belongs to the G-protein coupled receptor 1 family.

Its subcellular location is the cell membrane. Its function is as follows. Receptor for neuropeptide Y and peptide YY. In Canis lupus familiaris (Dog), this protein is Neuropeptide Y receptor type 1 (NPY1R).